The chain runs to 291 residues: 4-diphosphocytidyl-2-C-methyl-D-erythritol kinase (291 aa).

The active site involves lysine 10. 94 to 104 (PVSAGLAGGSS) is an ATP binding site. Aspartate 136 is an active-site residue.

This sequence belongs to the GHMP kinase family. IspE subfamily.

It catalyses the reaction 4-CDP-2-C-methyl-D-erythritol + ATP = 4-CDP-2-C-methyl-D-erythritol 2-phosphate + ADP + H(+). The protein operates within isoprenoid biosynthesis; isopentenyl diphosphate biosynthesis via DXP pathway; isopentenyl diphosphate from 1-deoxy-D-xylulose 5-phosphate: step 3/6. In terms of biological role, catalyzes the phosphorylation of the position 2 hydroxy group of 4-diphosphocytidyl-2C-methyl-D-erythritol. This is 4-diphosphocytidyl-2-C-methyl-D-erythritol kinase from Listeria welshimeri serovar 6b (strain ATCC 35897 / DSM 20650 / CCUG 15529 / CIP 8149 / NCTC 11857 / SLCC 5334 / V8).